An 82-amino-acid polypeptide reads, in one-letter code: Chlorosome protein E (82 aa).

An a bacteriochlorophyll c-binding site is contributed by His-26. Positions 55-82 are disordered; it reads GSSGLKGSSPKYSGYATPSKEVKSRFEK. Positions 59–69 are enriched in low complexity; sequence LKGSSPKYSGY.

Belongs to the BChl C/E-binding protein family.

The protein resides in the chlorosome. It is found in the chlorosome envelope. Component of the photosynthetic apparatus. The light harvesting B740 complex binds bacteriochlorophyll c. This chain is Chlorosome protein E (csmE), found in Chlorobaculum tepidum (strain ATCC 49652 / DSM 12025 / NBRC 103806 / TLS) (Chlorobium tepidum).